We begin with the raw amino-acid sequence, 124 residues long: Ribonuclease pancreatic A (124 aa).

The segment at 1–24 is disordered; that stretch reads AESSAMKFERQHVDSGGSSSSNAN. Positions 7 and 10 each coordinate substrate. His-12 acts as the Proton acceptor in catalysis. 4 disulfide bridges follow: Cys-26-Cys-84, Cys-40-Cys-95, Cys-58-Cys-110, and Cys-65-Cys-72. Residues 41-45, Lys-66, and Arg-85 contribute to the substrate site; that span reads KPVNT. The active-site Proton donor is His-119.

Belongs to the pancreatic ribonuclease family. As to expression, pancreas.

Its subcellular location is the secreted. The catalysed reaction is an [RNA] containing cytidine + H2O = an [RNA]-3'-cytidine-3'-phosphate + a 5'-hydroxy-ribonucleotide-3'-[RNA].. It carries out the reaction an [RNA] containing uridine + H2O = an [RNA]-3'-uridine-3'-phosphate + a 5'-hydroxy-ribonucleotide-3'-[RNA].. This chain is Ribonuclease pancreatic A, found in Cavia porcellus (Guinea pig).